A 124-amino-acid chain; its full sequence is uncharacterized protein (124 aa).

One can recognise a GIY-YIG domain in the interval 42 to 118 (DKGGIFMFYN…INTQHSKYNI (77 aa)).

This is an uncharacterized protein from Bacillus subtilis (strain 168).